Here is a 116-residue protein sequence, read N- to C-terminus: Staphylococcal complement inhibitor (116 aa).

The signal sequence occupies residues methionine 1–alanine 31. Residues leucine 62 to glycine 79 form an essential for activity region.

This sequence belongs to the SCIN family.

It is found in the secreted. Its function is as follows. Involved in countering the first line of host defense mechanisms. Efficiently inhibits opsonization, phagocytosis and killing of S.aureus by human neutrophils. Acts by binding and stabilizing human C3 convertases (C4b2a and C3bBb), leading to their inactivation. The convertases are no longer able to cleave complement C3, therefore preventing further C3b deposition on the bacterial surface and phagocytosis of the bacterium. Also prevents C5a-induced neutrophil responses. This is Staphylococcal complement inhibitor (scn) from Staphylococcus aureus (strain Mu50 / ATCC 700699).